A 26-amino-acid chain; its full sequence is Acyl carrier protein (26 aa).

The Carrier domain occupies Ser2 to Glu26.

The protein belongs to the acyl carrier protein (ACP) family. In terms of processing, 4'-phosphopantetheine is transferred from CoA to a specific serine of apo-ACP by AcpS. This modification is essential for activity because fatty acids are bound in thioester linkage to the sulfhydryl of the prosthetic group.

The protein resides in the cytoplasm. It participates in lipid metabolism; fatty acid biosynthesis. Carrier of the growing fatty acid chain in fatty acid biosynthesis. This is Acyl carrier protein (acpP) from Erythrobacter longus.